The chain runs to 287 residues: Elongation factor Ts (287 aa).

An involved in Mg(2+) ion dislocation from EF-Tu region spans residues 80-83 (TDFL).

The protein belongs to the EF-Ts family.

The protein resides in the cytoplasm. Its function is as follows. Associates with the EF-Tu.GDP complex and induces the exchange of GDP to GTP. It remains bound to the aminoacyl-tRNA.EF-Tu.GTP complex up to the GTP hydrolysis stage on the ribosome. The chain is Elongation factor Ts from Pseudomonas entomophila (strain L48).